Reading from the N-terminus, the 603-residue chain is DNA mismatch repair protein MutL (603 aa).

Positions 336–346 (EVSKKQKEQQK) are enriched in basic and acidic residues. 2 disordered regions span residues 336 to 355 (EVSK…MSFE) and 361 to 384 (KETP…DTSR).

Belongs to the DNA mismatch repair MutL/HexB family.

Functionally, this protein is involved in the repair of mismatches in DNA. It is required for dam-dependent methyl-directed DNA mismatch repair. May act as a 'molecular matchmaker', a protein that promotes the formation of a stable complex between two or more DNA-binding proteins in an ATP-dependent manner without itself being part of a final effector complex. This is DNA mismatch repair protein MutL from Listeria welshimeri serovar 6b (strain ATCC 35897 / DSM 20650 / CCUG 15529 / CIP 8149 / NCTC 11857 / SLCC 5334 / V8).